A 378-amino-acid chain; its full sequence is Enoyl-[acyl-carrier-protein] reductase 1, mitochondrial (378 aa).

The Proton donor role is filled by Tyr-59. Residues Asn-151, 180–183 (NSQV), 203–206 (RDGK), 284–287 (YGGM), 309–311 (YWL), and Lys-372 each bind NADP(+).

The protein belongs to the zinc-containing alcohol dehydrogenase family. Quinone oxidoreductase subfamily. As to quaternary structure, homodimer.

It is found in the mitochondrion matrix. The enzyme catalyses a 2,3-saturated acyl-[ACP] + NADP(+) = a (2E)-enoyl-[ACP] + NADPH + H(+). Catalyzes the NADPH-dependent reduction of trans-2-enoyl thioesters in mitochondrial fatty acid synthesis (fatty acid synthesis type II). Fatty acid chain elongation in mitochondria uses acyl carrier protein (ACP) as an acyl group carrier, but the enzyme accepts both ACP and CoA thioesters as substrates in vitro. Required for respiration and the maintenance of the mitochondrial compartment. This chain is Enoyl-[acyl-carrier-protein] reductase 1, mitochondrial (ETR1), found in Debaryomyces hansenii (strain ATCC 36239 / CBS 767 / BCRC 21394 / JCM 1990 / NBRC 0083 / IGC 2968) (Yeast).